A 200-amino-acid polypeptide reads, in one-letter code: MESHNVSNSLNLDMEMDQEKAFDYSKRAQWLRAAVLGANDGLVSTASLMMGVGAVKQDVKVMILSGFAGLVAGACSMAIGEFVSVYSQYDIEVAQMKRENGGQVEKEKLPSPMQAAAASALAFSLGAIVPLMAAAFVKDYHVRIGAIVAAVTLALVMFGWLGAVLGKAPVFKSSARVLIGGWLAMAVTFGLTKLIGTHSL.

At M1 to A34 the chain is on the cytoplasmic side. The helical transmembrane segment at V35–V55 threads the bilayer. Residues K56–M62 are Vacuolar-facing. The helical transmembrane segment at I63–V83 threads the bilayer. Residues S84–A116 lie on the Cytoplasmic side of the membrane. The helical transmembrane segment at A117–V137 threads the bilayer. Residues K138–R143 are Vacuolar-facing. The helical transmembrane segment at I144–V164 threads the bilayer. Over L165–R176 the chain is Cytoplasmic. Residues V177–T197 form a helical membrane-spanning segment. Topologically, residues H198 to L200 are vacuolar.

It belongs to the CCC1 family. Expressed in the vascular bundles of the shoot and the stele of the root. Expressed in inflorescences and at lower levels in leaves.

It is found in the vacuole membrane. The enzyme catalyses Fe(2+)(in) = Fe(2+)(out). In terms of biological role, vacuolar iron transporter involved in the transfer of iron ions from the cytosol to the vacuole for intracellular iron storage. Involved in regulation of cellular iron homeostasis. Vacuolar iron storage is required for seed embryo and seedling development. The polypeptide is Vacuolar iron transporter homolog 1 (Arabidopsis thaliana (Mouse-ear cress)).